Here is a 367-residue protein sequence, read N- to C-terminus: Protein P39 (367 aa).

Coiled coils occupy residues 165–202 and 235–308; these read REGE…SKQQ and EMIE…SDRL.

Functionally, might be involved in virion assembly and vector-mediated transmission of the virus. The protein is Protein P39 of Peanut clump virus (isolate 87/TGTA2) (PCV).